Reading from the N-terminus, the 1345-residue chain is DNA-directed RNA polymerase subunit beta (1345 aa).

Belongs to the RNA polymerase beta chain family. In terms of assembly, the RNAP catalytic core consists of 2 alpha, 1 beta, 1 beta' and 1 omega subunit. When a sigma factor is associated with the core the holoenzyme is formed, which can initiate transcription.

The catalysed reaction is RNA(n) + a ribonucleoside 5'-triphosphate = RNA(n+1) + diphosphate. DNA-dependent RNA polymerase catalyzes the transcription of DNA into RNA using the four ribonucleoside triphosphates as substrates. This is DNA-directed RNA polymerase subunit beta from Shewanella sp. (strain ANA-3).